Reading from the N-terminus, the 157-residue chain is 2-C-methyl-D-erythritol 2,4-cyclodiphosphate synthase (157 aa).

A divalent metal cation-binding residues include aspartate 8 and histidine 10. 4-CDP-2-C-methyl-D-erythritol 2-phosphate is bound by residues 8 to 10 and 34 to 35; these read DVH and HS. Histidine 42 lines the a divalent metal cation pocket. 4-CDP-2-C-methyl-D-erythritol 2-phosphate contacts are provided by residues 56–58, 132–135, phenylalanine 139, and arginine 142; these read DIG and TTNE.

This sequence belongs to the IspF family. As to quaternary structure, homotrimer. A divalent metal cation serves as cofactor.

It carries out the reaction 4-CDP-2-C-methyl-D-erythritol 2-phosphate = 2-C-methyl-D-erythritol 2,4-cyclic diphosphate + CMP. It participates in isoprenoid biosynthesis; isopentenyl diphosphate biosynthesis via DXP pathway; isopentenyl diphosphate from 1-deoxy-D-xylulose 5-phosphate: step 4/6. Its function is as follows. Involved in the biosynthesis of isopentenyl diphosphate (IPP) and dimethylallyl diphosphate (DMAPP), two major building blocks of isoprenoid compounds. Catalyzes the conversion of 4-diphosphocytidyl-2-C-methyl-D-erythritol 2-phosphate (CDP-ME2P) to 2-C-methyl-D-erythritol 2,4-cyclodiphosphate (ME-CPP) with a corresponding release of cytidine 5-monophosphate (CMP). The sequence is that of 2-C-methyl-D-erythritol 2,4-cyclodiphosphate synthase from Symbiobacterium thermophilum (strain DSM 24528 / JCM 14929 / IAM 14863 / T).